The following is a 218-amino-acid chain: Pyridoxine/pyridoxamine 5'-phosphate oxidase (218 aa).

Residues 14–17 and Lys-72 each bind substrate; that span reads RREY. FMN-binding positions include 67 to 72, 82 to 83, Arg-88, Lys-89, and Gln-111; these read RIVLLK and YT. Substrate contacts are provided by Tyr-129, Arg-133, and Ser-137. FMN is bound by residues 146–147 and Trp-191; that span reads QS. Residue 197–199 coordinates substrate; it reads RLH. An FMN-binding site is contributed by Arg-201.

Belongs to the pyridoxamine 5'-phosphate oxidase family. As to quaternary structure, homodimer. Requires FMN as cofactor.

It carries out the reaction pyridoxamine 5'-phosphate + O2 + H2O = pyridoxal 5'-phosphate + H2O2 + NH4(+). It catalyses the reaction pyridoxine 5'-phosphate + O2 = pyridoxal 5'-phosphate + H2O2. The protein operates within cofactor metabolism; pyridoxal 5'-phosphate salvage; pyridoxal 5'-phosphate from pyridoxamine 5'-phosphate: step 1/1. It functions in the pathway cofactor metabolism; pyridoxal 5'-phosphate salvage; pyridoxal 5'-phosphate from pyridoxine 5'-phosphate: step 1/1. Functionally, catalyzes the oxidation of either pyridoxine 5'-phosphate (PNP) or pyridoxamine 5'-phosphate (PMP) into pyridoxal 5'-phosphate (PLP). The chain is Pyridoxine/pyridoxamine 5'-phosphate oxidase from Klebsiella pneumoniae subsp. pneumoniae (strain ATCC 700721 / MGH 78578).